We begin with the raw amino-acid sequence, 839 residues long: LPS-assembly protein LptD (839 aa).

An N-terminal signal peptide occupies residues 1–21 (MAIGITACVLSLINYQGLAYS).

This sequence belongs to the LptD family. As to quaternary structure, component of the lipopolysaccharide transport and assembly complex. Interacts with LptE and LptA.

It is found in the cell outer membrane. In terms of biological role, together with LptE, is involved in the assembly of lipopolysaccharide (LPS) at the surface of the outer membrane. The chain is LPS-assembly protein LptD from Legionella pneumophila (strain Paris).